We begin with the raw amino-acid sequence, 219 residues long: Thiamine-phosphate synthase (219 aa).

Residues 44 to 48 (QFREK) and Asn79 each bind 4-amino-2-methyl-5-(diphosphooxymethyl)pyrimidine. The Mg(2+) site is built by Asp80 and Asp99. Ser117 contacts 4-amino-2-methyl-5-(diphosphooxymethyl)pyrimidine. 143–145 (TST) provides a ligand contact to 2-[(2R,5Z)-2-carboxy-4-methylthiazol-5(2H)-ylidene]ethyl phosphate. Residue Lys146 coordinates 4-amino-2-methyl-5-(diphosphooxymethyl)pyrimidine. Residues Gly175 and 195–196 (IS) contribute to the 2-[(2R,5Z)-2-carboxy-4-methylthiazol-5(2H)-ylidene]ethyl phosphate site.

Belongs to the thiamine-phosphate synthase family. It depends on Mg(2+) as a cofactor.

The catalysed reaction is 2-[(2R,5Z)-2-carboxy-4-methylthiazol-5(2H)-ylidene]ethyl phosphate + 4-amino-2-methyl-5-(diphosphooxymethyl)pyrimidine + 2 H(+) = thiamine phosphate + CO2 + diphosphate. It catalyses the reaction 2-(2-carboxy-4-methylthiazol-5-yl)ethyl phosphate + 4-amino-2-methyl-5-(diphosphooxymethyl)pyrimidine + 2 H(+) = thiamine phosphate + CO2 + diphosphate. It carries out the reaction 4-methyl-5-(2-phosphooxyethyl)-thiazole + 4-amino-2-methyl-5-(diphosphooxymethyl)pyrimidine + H(+) = thiamine phosphate + diphosphate. It participates in cofactor biosynthesis; thiamine diphosphate biosynthesis; thiamine phosphate from 4-amino-2-methyl-5-diphosphomethylpyrimidine and 4-methyl-5-(2-phosphoethyl)-thiazole: step 1/1. Condenses 4-methyl-5-(beta-hydroxyethyl)thiazole monophosphate (THZ-P) and 2-methyl-4-amino-5-hydroxymethyl pyrimidine pyrophosphate (HMP-PP) to form thiamine monophosphate (TMP). The protein is Thiamine-phosphate synthase of Bacillus cereus (strain AH820).